The sequence spans 867 residues: Nitrate reductase [NADPH] (867 aa).

Residues 38–58 (DIPLPPPSKEPTEVLSIDKPT) form a disordered region. C152 lines the Mo-molybdopterin pocket. Residues 514-589 (NRIIDLQEFK…MPDYHIGTMD (76 aa)) form the Cytochrome b5 heme-binding domain. Positions 549 and 572 each coordinate heme. The FAD-binding FR-type domain occupies 615–726 (KSWTKATLVK…KGPTGRFEYL (112 aa)). Residues 669-672 (RSYT), 686-690 (LVKIY), F691, 700-702 (KMT), and T753 each bind FAD. NADP(+) is bound at residue 837 to 846 (MVLICGPEAM).

This sequence belongs to the nitrate reductase family. As to quaternary structure, homodimer. It depends on FAD as a cofactor. The cofactor is heme. Mo-molybdopterin serves as cofactor.

It catalyses the reaction nitrite + NADP(+) + H2O = nitrate + NADPH + H(+). In terms of biological role, nitrate reductase is a key enzyme involved in the first step of nitrate assimilation in plants, fungi and bacteria. This Aspergillus niger protein is Nitrate reductase [NADPH] (niaD).